A 156-amino-acid polypeptide reads, in one-letter code: ATP synthase subunit b (156 aa).

Residues 5–27 traverse the membrane as a helical segment; that stretch reads ITLIGQMITFAIFVGFTMKFVWP.

It belongs to the ATPase B chain family. F-type ATPases have 2 components, F(1) - the catalytic core - and F(0) - the membrane proton channel. F(1) has five subunits: alpha(3), beta(3), gamma(1), delta(1), epsilon(1). F(0) has three main subunits: a(1), b(2) and c(10-14). The alpha and beta chains form an alternating ring which encloses part of the gamma chain. F(1) is attached to F(0) by a central stalk formed by the gamma and epsilon chains, while a peripheral stalk is formed by the delta and b chains.

It is found in the cell inner membrane. Its function is as follows. F(1)F(0) ATP synthase produces ATP from ADP in the presence of a proton or sodium gradient. F-type ATPases consist of two structural domains, F(1) containing the extramembraneous catalytic core and F(0) containing the membrane proton channel, linked together by a central stalk and a peripheral stalk. During catalysis, ATP synthesis in the catalytic domain of F(1) is coupled via a rotary mechanism of the central stalk subunits to proton translocation. Functionally, component of the F(0) channel, it forms part of the peripheral stalk, linking F(1) to F(0). In Francisella tularensis subsp. tularensis (strain SCHU S4 / Schu 4), this protein is ATP synthase subunit b.